The sequence spans 403 residues: Putative gustatory receptor 98b (403 aa).

The Cytoplasmic portion of the chain corresponds to 1-11 (MVAQKSRLLAR). The chain crosses the membrane as a helical span at residues 12–32 (AFPYLDIFSVFALTPPPQSFG). Topologically, residues 33-48 (HTPHRRLRWYLMTGYV) are extracellular. A helical transmembrane segment spans residues 49-69 (FYATAILATVFIVSYFNIIAI). Over 70–83 (DEEVLEYNVSDFTR) the chain is Cytoplasmic. The helical transmembrane segment at 84-104 (VMGNIQKSLYSIMAIANHLNM) threads the bilayer. Topologically, residues 105–144 (LINYRRLGGIYKDIADLEMDMDEASQCFGGQRQRFSFRFR) are extracellular. A helical transmembrane segment spans residues 145–165 (MALCVGVWMILMVGSMPRLTM). Topologically, residues 166–191 (TAMGPFVSTLLKILTEFVMIMQQLKS) are cytoplasmic. A helical transmembrane segment spans residues 192–212 (LEYCVFVLIIYELVLRLRRTL). The Extracellular portion of the chain corresponds to 213–259 (SQLQEEFQDCEQQDMLQALCVALKRNQLLLGRIWRLEGDVGSYFTPT). Residues 260–280 (MLLLFLYNGLTILHMVNWAYI) form a helical membrane-spanning segment. Topologically, residues 281–365 (NKFLYDSCCQ…LRFTCGGLFD (85 aa)) are cytoplasmic. A helical membrane pass occupies residues 366-386 (INLKYFGGLLVTIFGYIIILI). Residues 387–403 (QFKVQAIAANRYKKVVN) are Extracellular-facing.

The protein belongs to the insect chemoreceptor superfamily. Gustatory receptor (GR) family. Gr2a subfamily.

It localises to the cell membrane. In terms of biological role, probable gustatory receptor which mediates acceptance or avoidance behavior, depending on its substrates. In Drosophila melanogaster (Fruit fly), this protein is Putative gustatory receptor 98b (Gr98b).